The chain runs to 57 residues: Three-finger toxin Tschuditoxin-I (57 aa).

Disulfide bonds link Cys3-Cys22, Cys17-Cys39, and Cys41-Cys52.

Expressed by the venom gland.

The protein localises to the secreted. Functionally, produces peripheral paralysis by blocking neuromuscular transmission at the postsynaptic site. Binds to and inhibits the endogenous nicotinic acetylcholine receptors (nAChR). This neurotoxin is lethal to mice by intraperitoneal or intravenous injection. The sequence is that of Three-finger toxin Tschuditoxin-I from Micrurus tschudii (Desert coral snake).